Reading from the N-terminus, the 70-residue chain is Brevinin-1MT1 (70 aa).

An N-terminal signal peptide occupies residues 1–22 (MFTLKKSLLLLFFLGTINLSLC). A propeptide spanning residues 23 to 44 (EQERDADEEERRDDDEMDVEVE) is cleaved from the precursor. Cys64 and Cys70 form a disulfide bridge.

It belongs to the frog skin active peptide (FSAP) family. Brevinin subfamily. In terms of tissue distribution, expressed by the skin glands.

The protein resides in the secreted. In terms of biological role, antimicrobial peptide with activity against a variety of Gram-negative and Gram-positive bacteria and against fungi. Shows strong hemolytic activity against human erythrocytes. The polypeptide is Brevinin-1MT1 (Amolops mantzorum (Sichuan torrent frog)).